Reading from the N-terminus, the 327-residue chain is 2-keto-3-deoxygluconate permease (327 aa).

10 helical membrane passes run I10–P30, G42–I62, K73–S93, I95–V115, A139–G159, I163–A183, V199–I219, L224–A244, T254–A274, and S289–W309.

Belongs to the KdgT transporter family.

Its subcellular location is the cell inner membrane. The catalysed reaction is 2-dehydro-3-deoxy-D-gluconate(in) + H(+)(in) = 2-dehydro-3-deoxy-D-gluconate(out) + H(+)(out). In terms of biological role, catalyzes the proton-dependent uptake of 2-keto-3-deoxygluconate (KDG) into the cell. The chain is 2-keto-3-deoxygluconate permease from Escherichia coli O139:H28 (strain E24377A / ETEC).